The primary structure comprises 838 residues: Probable inorganic carbon transporter subunit DabA (838 aa).

Zn(2+) is bound by residues Cys353, Asp355, His537, and Cys552.

Belongs to the inorganic carbon transporter (TC 9.A.2) DabA family. Forms a complex with DabB. Zn(2+) is required as a cofactor.

The protein localises to the cell membrane. Functionally, part of an energy-coupled inorganic carbon pump. This chain is Probable inorganic carbon transporter subunit DabA, found in Roseiflexus sp. (strain RS-1).